The sequence spans 176 residues: ATP-dependent protease subunit HslV (176 aa).

Threonine 4 is an active-site residue. Na(+) contacts are provided by glycine 158, cysteine 161, and threonine 164.

The protein belongs to the peptidase T1B family. HslV subfamily. As to quaternary structure, a double ring-shaped homohexamer of HslV is capped on each side by a ring-shaped HslU homohexamer. The assembly of the HslU/HslV complex is dependent on binding of ATP.

Its subcellular location is the cytoplasm. It catalyses the reaction ATP-dependent cleavage of peptide bonds with broad specificity.. Its activity is regulated as follows. Allosterically activated by HslU binding. Functionally, protease subunit of a proteasome-like degradation complex believed to be a general protein degrading machinery. In Rhizobium meliloti (strain 1021) (Ensifer meliloti), this protein is ATP-dependent protease subunit HslV.